The chain runs to 261 residues: Cytochrome c oxidase subunit 3 (261 aa).

The Mitochondrial matrix segment spans residues 1-15; the sequence is MTHQTHAYHMVNPSP. The chain crosses the membrane as a helical span at residues 16 to 34; it reads WPLTGALSALLMTSGLIMW. Residues 35–40 lie on the Mitochondrial intermembrane side of the membrane; the sequence is FHFNSM. A helical transmembrane segment spans residues 41–66; it reads YLLMLGLTTNTLTMYQWWRDIVREST. Residues 67–72 are Mitochondrial matrix-facing; it reads FQGHHT. The chain crosses the membrane as a helical span at residues 73–105; that stretch reads PIVQKGLRYGMILFIVSEVFFFAGFFWAFYHSS. Residues 106–128 lie on the Mitochondrial intermembrane side of the membrane; that stretch reads LAPTPELGGCWPPTGITPLNPME. The chain crosses the membrane as a helical span at residues 129–152; that stretch reads VPLLNTSVLLASGVSITWAHHSLM. The Mitochondrial matrix segment spans residues 153–155; that stretch reads EGN. Residues 156 to 183 traverse the membrane as a helical segment; it reads RKHMLQALFITISLGIYFTLLQASEYYE. Residues 184-190 are Mitochondrial intermembrane-facing; the sequence is TPFTISD. Residues 191-223 traverse the membrane as a helical segment; the sequence is GIYGSTFFMATGFHGLHVIIGSTFLIVCFVRQL. Residues 224–232 are Mitochondrial matrix-facing; it reads KFHFTSNHH. The helical transmembrane segment at 233-256 threads the bilayer; it reads FGFEAAAWYWHFVDVVWLFLYVSI. Residues 257-261 are Mitochondrial intermembrane-facing; sequence YWWGS.

The protein belongs to the cytochrome c oxidase subunit 3 family. Component of the cytochrome c oxidase (complex IV, CIV), a multisubunit enzyme composed of 14 subunits. The complex is composed of a catalytic core of 3 subunits MT-CO1, MT-CO2 and MT-CO3, encoded in the mitochondrial DNA, and 11 supernumerary subunits COX4I, COX5A, COX5B, COX6A, COX6B, COX6C, COX7A, COX7B, COX7C, COX8 and NDUFA4, which are encoded in the nuclear genome. The complex exists as a monomer or a dimer and forms supercomplexes (SCs) in the inner mitochondrial membrane with NADH-ubiquinone oxidoreductase (complex I, CI) and ubiquinol-cytochrome c oxidoreductase (cytochrome b-c1 complex, complex III, CIII), resulting in different assemblies (supercomplex SCI(1)III(2)IV(1) and megacomplex MCI(2)III(2)IV(2)).

It localises to the mitochondrion inner membrane. It carries out the reaction 4 Fe(II)-[cytochrome c] + O2 + 8 H(+)(in) = 4 Fe(III)-[cytochrome c] + 2 H2O + 4 H(+)(out). In terms of biological role, component of the cytochrome c oxidase, the last enzyme in the mitochondrial electron transport chain which drives oxidative phosphorylation. The respiratory chain contains 3 multisubunit complexes succinate dehydrogenase (complex II, CII), ubiquinol-cytochrome c oxidoreductase (cytochrome b-c1 complex, complex III, CIII) and cytochrome c oxidase (complex IV, CIV), that cooperate to transfer electrons derived from NADH and succinate to molecular oxygen, creating an electrochemical gradient over the inner membrane that drives transmembrane transport and the ATP synthase. Cytochrome c oxidase is the component of the respiratory chain that catalyzes the reduction of oxygen to water. Electrons originating from reduced cytochrome c in the intermembrane space (IMS) are transferred via the dinuclear copper A center (CU(A)) of subunit 2 and heme A of subunit 1 to the active site in subunit 1, a binuclear center (BNC) formed by heme A3 and copper B (CU(B)). The BNC reduces molecular oxygen to 2 water molecules using 4 electrons from cytochrome c in the IMS and 4 protons from the mitochondrial matrix. The protein is Cytochrome c oxidase subunit 3 (MT-CO3) of Phoca vitulina (Harbor seal).